A 1321-amino-acid chain; its full sequence is C-Jun-amino-terminal kinase-interacting protein 4 (1321 aa).

The residue at position 1 (Met-1) is an N-acetylmethionine. One can recognise an RH1 domain in the interval 7–95 (VVYQEEPGGS…ITQYEREKAL (89 aa)). Positions 66–166 (AQDQEHQVEL…NALHQRHTEM (101 aa)) form a coiled coil. A phosphoserine mark is found at Ser-109, Ser-183, Ser-185, Ser-194, and Ser-203. Residues 203–308 (SLGIFPLPAG…EGFVKGTDTS (106 aa)) are disordered. Thr-217 carries the post-translational modification Phosphothreonine. Residues 236 to 248 (ELSQPRSHTSLKV) show a composition bias toward polar residues. 5 positions are modified to phosphoserine: Ser-238, Ser-251, Ser-265, Ser-268, and Ser-272. Positions 266-285 (DISQGGSKATTPASTANSDV) are enriched in polar residues. Position 292 is a phosphothreonine (Thr-292). Phosphoserine is present on residues Ser-311, Ser-329, Ser-332, and Ser-347. Residues 322-332 (AQETRNVSTES) show a composition bias toward polar residues. Positions 322–341 (AQETRNVSTESGENEEKSEV) are disordered. Residues Thr-348, Thr-365, and Thr-418 each carry the phosphothreonine modification. Positions 408–534 (REVENLILEN…LQEAVRWTEM (127 aa)) form a coiled coil. The segment covering 473 to 489 (LRKARAEAEDARQKAKD) has biased composition (basic and acidic residues). Disordered stretches follow at residues 473-500 (LRKARAEAEDARQKAKDDDDSDIPTAQR) and 563-600 (SSNATKKPEPPVNLKYNAPTSHVTPSVKKRSSTLSQLP). Residues 500-604 (RKRFTRVEMA…TLSQLPGDKS (105 aa)) enclose the RH2 domain. Thr-586 is modified (phosphothreonine). Ser-588 is modified (phosphoserine). Thr-595 is subject to Phosphothreonine. Ser-705, Ser-728, Ser-730, Ser-732, and Ser-733 each carry phosphoserine. Positions 724-758 (SKQRSASQSSLDKLDQELKEQQKEFKNQEELSSQV) form a coiled coil. Positions 853 to 883 (TGAATSPSTNGASPVIEKPPEMETENSEVDE) are disordered. Polar residues predominate over residues 855–864 (AATSPSTNGA). Residues 874–883 (METENSEVDE) are compositionally biased toward acidic residues. Position 1188 is a phosphoserine (Ser-1188). Residues 1239–1267 (PQSSSGGADLTADKAGSSAQEPSSQTPLK) are disordered. Residues 1255 to 1266 (SSAQEPSSQTPL) are compositionally biased toward polar residues. Position 1264 is a phosphothreonine (Thr-1264).

It belongs to the JIP scaffold family. Homodimer. The homodimer interacts with ARF6, forming a heterotetramer. Homooligomer. Interacts with MAX, MAPK8, MAPK14, MAP3K3, MYC, and MAP2K4. Interacts with KNS2. Interaction with KNS2 is important in the formation of ternary complex with MAPK8. Interacts with PIP4P1. Interacts with PIKFYVE. Post-translationally, phosphorylated by MAPK8 and MAPK14. Highly expressed in brain, kidney, liver, heart.

Its subcellular location is the cytoplasm. It is found in the perinuclear region. The protein resides in the lysosome membrane. The JNK-interacting protein (JIP) group of scaffold proteins selectively mediates JNK signaling by aggregating specific components of the MAPK cascade to form a functional JNK signaling module. Regulates lysosomal positioning by acting as an adapter protein which links PIP4P1-positive lysosomes to the dynein-dynactin complex. Assists PIKFYVE selective functionality in microtubule-based endosome-to-TGN trafficking. This chain is C-Jun-amino-terminal kinase-interacting protein 4, found in Mus musculus (Mouse).